A 268-amino-acid polypeptide reads, in one-letter code: Purine nucleoside phosphorylase (268 aa).

Phosphate-binding positions include S36, H68, 88 to 90 (RIH), and A120. E189 provides a ligand contact to a purine D-ribonucleoside. Residue S208 coordinates phosphate. N231 contacts a purine D-ribonucleoside.

The protein belongs to the PNP/MTAP phosphorylase family. Homotrimer.

It carries out the reaction a purine 2'-deoxy-D-ribonucleoside + phosphate = a purine nucleobase + 2-deoxy-alpha-D-ribose 1-phosphate. It functions in the pathway purine metabolism; purine nucleoside salvage. Functionally, the purine nucleoside phosphorylases catalyze the phosphorolytic breakdown of the N-glycosidic bond in the beta-(deoxy)ribonucleoside molecules, with the formation of the corresponding free purine bases and pentose-1-phosphate. Cleaves guanosine, inosine, 2'-deoxyguanosine and 2'-deoxyinosine. This chain is Purine nucleoside phosphorylase (punA), found in Mycobacterium bovis (strain ATCC BAA-935 / AF2122/97).